The chain runs to 556 residues: Arginine--tRNA ligase (556 aa).

The 'HIGH' region motif lies at 132 to 142 (ANPTGDLHLGH).

It belongs to the class-I aminoacyl-tRNA synthetase family. In terms of assembly, monomer.

It localises to the cytoplasm. It carries out the reaction tRNA(Arg) + L-arginine + ATP = L-arginyl-tRNA(Arg) + AMP + diphosphate. This chain is Arginine--tRNA ligase (argS), found in Bacillus subtilis (strain 168).